The chain runs to 319 residues: tRNA uridine(34) hydroxylase (319 aa).

The Rhodanese domain occupies 124–218 (LDEDTVILDA…YGKNEETKGE (95 aa)). The active-site Cysteine persulfide intermediate is the C178.

Belongs to the TrhO family.

It catalyses the reaction uridine(34) in tRNA + AH2 + O2 = 5-hydroxyuridine(34) in tRNA + A + H2O. Its function is as follows. Catalyzes oxygen-dependent 5-hydroxyuridine (ho5U) modification at position 34 in tRNAs. The polypeptide is tRNA uridine(34) hydroxylase (Listeria monocytogenes serotype 4a (strain HCC23)).